A 471-amino-acid polypeptide reads, in one-letter code: E3 ubiquitin-protein ligase TRIM38 (471 aa).

The RING-type zinc-finger motif lies at 16–62 (CSICKAMMSHPVSINCGHSYCKSCIQSYYCNVSPKTGWKMLGCPLCS). The B box-type zinc-finger motif lies at 90–131 (DQDMVCEEHEEKFNRFCEDDGQLLCWRCYWEDRHKGHTLAHV). 4 residues coordinate Zn(2+): cysteine 95, histidine 98, cysteine 117, and histidine 123. Residues 276–471 (CNVSELYFDV…PLFLPAINNQ (196 aa)) form the B30.2/SPRY domain.

In terms of assembly, interacts (via B30.2/SPRY domain) with TAB2 and TAB3.

Its subcellular location is the cytoplasm. The catalysed reaction is S-ubiquitinyl-[E2 ubiquitin-conjugating enzyme]-L-cysteine + [acceptor protein]-L-lysine = [E2 ubiquitin-conjugating enzyme]-L-cysteine + N(6)-ubiquitinyl-[acceptor protein]-L-lysine.. It participates in protein modification; protein ubiquitination. The protein operates within protein modification; protein sumoylation. Its function is as follows. E3 ubiquitin-protein and E3 SUMO-protein ligase that acts as a regulator of innate immunity. Acts as a negative regulator of type I interferon IFN-beta production by catalyzing 'Lys-48'-linked polyubiquitination of AZI2/NAP1, leading to its degradation. Mediates 'Lys-48'-linked polyubiquitination and proteasomal degradation of the critical TLR adapter TICAM1, inhibiting TLR3-mediated type I interferon signaling. Acts as a positive regulator of the cGAS-STING pathway by acting as a E3 SUMO-protein ligase: mediates sumoylation of CGAS and STING, preventing their degradation and thereby activating the innate immune response to DNA virus. Also acts as a negative regulator of NF-kappa-B signaling independently of its E3 protein ligase activity by promoting lysosome-dependent degradation of TAB2 and TAB3 adapters. The chain is E3 ubiquitin-protein ligase TRIM38 from Mus musculus (Mouse).